We begin with the raw amino-acid sequence, 353 residues long: Paraneoplastic antigen Ma1 homolog (353 aa).

This sequence belongs to the PNMA family. Testis and brain specific.

It localises to the nucleus. It is found in the nucleolus. The polypeptide is Paraneoplastic antigen Ma1 homolog (Pnma1) (Rattus norvegicus (Rat)).